Consider the following 370-residue polypeptide: Queuine tRNA-ribosyltransferase (370 aa).

D89 (proton acceptor) is an active-site residue. Residues 89 to 93 (DSGGF), D143, and G214 each bind substrate. The RNA binding stretch occupies residues 245–251 (GVGKPED). The active-site Nucleophile is the D264. Residues 269-273 (TRNAR) form an RNA binding; important for wobble base 34 recognition region. Positions 302, 304, 307, and 333 each coordinate Zn(2+).

It belongs to the queuine tRNA-ribosyltransferase family. Homodimer. Within each dimer, one monomer is responsible for RNA recognition and catalysis, while the other monomer binds to the replacement base PreQ1. Requires Zn(2+) as cofactor.

The catalysed reaction is 7-aminomethyl-7-carbaguanine + guanosine(34) in tRNA = 7-aminomethyl-7-carbaguanosine(34) in tRNA + guanine. Its pathway is tRNA modification; tRNA-queuosine biosynthesis. Its function is as follows. Catalyzes the base-exchange of a guanine (G) residue with the queuine precursor 7-aminomethyl-7-deazaguanine (PreQ1) at position 34 (anticodon wobble position) in tRNAs with GU(N) anticodons (tRNA-Asp, -Asn, -His and -Tyr). Catalysis occurs through a double-displacement mechanism. The nucleophile active site attacks the C1' of nucleotide 34 to detach the guanine base from the RNA, forming a covalent enzyme-RNA intermediate. The proton acceptor active site deprotonates the incoming PreQ1, allowing a nucleophilic attack on the C1' of the ribose to form the product. After dissociation, two additional enzymatic reactions on the tRNA convert PreQ1 to queuine (Q), resulting in the hypermodified nucleoside queuosine (7-(((4,5-cis-dihydroxy-2-cyclopenten-1-yl)amino)methyl)-7-deazaguanosine). This chain is Queuine tRNA-ribosyltransferase, found in Buchnera aphidicola subsp. Acyrthosiphon pisum (strain 5A).